We begin with the raw amino-acid sequence, 621 residues long: Lethal(3)malignant brain tumor-like protein 4 (621 aa).

Residues 1–48 are disordered; the sequence is MRQPNRKRKLSLESTERMNQDRCTGQTEEEKKPGEVTTPSKRESSVTT. 2 stretches are compositionally biased toward basic and acidic residues: residues 10–20 and 28–44; these read LSLESTERMNQ and EEEK…KRES. MBT repeat units follow at residues 52–152, 160–260, and 269–364; these read WSWE…LHIP, FVWM…LVAP, and FSWT…LEVP. Residues 370–414 form a CCHHC-type zinc finger; it reads VKILPGQPACPTPGCRGIGHIRGPRYAGHHSAFGCPYSDVNLKRE. 4 residues coordinate Zn(2+): cysteine 379, cysteine 384, histidine 398, and cysteine 404. An SAM domain is found at 543–607; sequence WTVDEVAEFV…YNSILMFRNS (65 aa).

Its subcellular location is the nucleus. Functionally, putative Polycomb group (PcG) protein. PcG proteins maintain the transcriptionally repressive state of genes, probably via a modification of chromatin, rendering it heritably changed in its expressibility. This Mus musculus (Mouse) protein is Lethal(3)malignant brain tumor-like protein 4 (L3mbtl4).